Consider the following 456-residue polypeptide: MVSTHAVVAGETLSALALRFYGDAELYRLIAAASGIADPDVVNVGQRLIMPDFTRYTVVAGDTLSALALRFYGDAELNWLIAAASGIADPDVVNVGQRLIMPDFTRYTVVAGDTLSALAARFYGDASLYPLIAAVNGIADPGVIDVGQVLVIFIGRSDGFGLRIVDRNENDPRLWYYRFQTSAIGWNPGVNVLLPDDYRTSGRTYPVLYLFHGGGTDQDFRTFDFLGIRDLTAGKPIIIVMPDGGHAGWYSNPVSSFVGPRNWETFHIAQLLPWIEANFRTYAEYDGRAVAGFSMGGFGALKYAAKYYGHFASASSHSGPASLRRDFGLVVHWANLSSAVLDLGGGTVYGAPLWDQARVSADNPVERIDSYRNKRIFLVAGTSPDPANWFDSVNETQVLAGQREFRERLSNAGIPHESHEVPGGHVFRPDMFRLDLDGIVARLRPASIGAAAERAD.

LysM domains lie at 3–50, 54–101, and 105–152; these read STHA…RLIM, TRYT…RLIM, and TRYT…VLVI. Active-site residues include Ser294, Asp391, and His425.

Belongs to the AB hydrolase superfamily.

The protein resides in the secreted. Its subcellular location is the cell wall. It carries out the reaction a fatty acid ester + H2O = an aliphatic alcohol + a fatty acid + H(+). Exhibits lipolytic activity with medium chain length esters as optimum substrates. The sequence is that of Esterase MT1326 from Mycobacterium tuberculosis (strain CDC 1551 / Oshkosh).